The primary structure comprises 483 residues: ATP synthase subunit beta (483 aa).

Position 169–176 (169–176 (GGAGVGKT)) interacts with ATP.

It belongs to the ATPase alpha/beta chains family. As to quaternary structure, F-type ATPases have 2 components, CF(1) - the catalytic core - and CF(0) - the membrane proton channel. CF(1) has five subunits: alpha(3), beta(3), gamma(1), delta(1), epsilon(1). CF(0) has three main subunits: a(1), b(2) and c(9-12). The alpha and beta chains form an alternating ring which encloses part of the gamma chain. CF(1) is attached to CF(0) by a central stalk formed by the gamma and epsilon chains, while a peripheral stalk is formed by the delta and b chains.

Its subcellular location is the cell membrane. It catalyses the reaction ATP + H2O + 4 H(+)(in) = ADP + phosphate + 5 H(+)(out). In terms of biological role, produces ATP from ADP in the presence of a proton gradient across the membrane. The catalytic sites are hosted primarily by the beta subunits. The sequence is that of ATP synthase subunit beta from Rhodococcus erythropolis (strain PR4 / NBRC 100887).